The chain runs to 464 residues: Siroheme synthase (464 aa).

Residues 1–203 are precorrin-2 dehydrogenase /sirohydrochlorin ferrochelatase; that stretch reads MEFLPLFHNL…GQGAEAERLL (203 aa). NAD(+) is bound by residues 22–23 and 43–44; these read EI and PE. Phosphoserine is present on Ser-128. Residues 216 to 464 form a uroporphyrinogen-III C-methyltransferase region; that stretch reads GEVYLVGAGP…AWFEGAQATV (249 aa). S-adenosyl-L-methionine is bound at residue Pro-225. Asp-248 acts as the Proton acceptor in catalysis. Lys-270 serves as the catalytic Proton donor. S-adenosyl-L-methionine-binding positions include 301-303, Ile-306, 331-332, Met-383, and Gly-412; these read GGD and TA.

This sequence in the N-terminal section; belongs to the precorrin-2 dehydrogenase / sirohydrochlorin ferrochelatase family. In the C-terminal section; belongs to the precorrin methyltransferase family.

It carries out the reaction uroporphyrinogen III + 2 S-adenosyl-L-methionine = precorrin-2 + 2 S-adenosyl-L-homocysteine + H(+). The catalysed reaction is precorrin-2 + NAD(+) = sirohydrochlorin + NADH + 2 H(+). The enzyme catalyses siroheme + 2 H(+) = sirohydrochlorin + Fe(2+). Its pathway is cofactor biosynthesis; adenosylcobalamin biosynthesis; precorrin-2 from uroporphyrinogen III: step 1/1. The protein operates within cofactor biosynthesis; adenosylcobalamin biosynthesis; sirohydrochlorin from precorrin-2: step 1/1. It participates in porphyrin-containing compound metabolism; siroheme biosynthesis; precorrin-2 from uroporphyrinogen III: step 1/1. It functions in the pathway porphyrin-containing compound metabolism; siroheme biosynthesis; siroheme from sirohydrochlorin: step 1/1. Its pathway is porphyrin-containing compound metabolism; siroheme biosynthesis; sirohydrochlorin from precorrin-2: step 1/1. Its function is as follows. Multifunctional enzyme that catalyzes the SAM-dependent methylations of uroporphyrinogen III at position C-2 and C-7 to form precorrin-2 via precorrin-1. Then it catalyzes the NAD-dependent ring dehydrogenation of precorrin-2 to yield sirohydrochlorin. Finally, it catalyzes the ferrochelation of sirohydrochlorin to yield siroheme. The sequence is that of Siroheme synthase from Pseudomonas savastanoi pv. phaseolicola (strain 1448A / Race 6) (Pseudomonas syringae pv. phaseolicola (strain 1448A / Race 6)).